A 798-amino-acid polypeptide reads, in one-letter code: Transferrin receptor protein 2 (798 aa).

The Cytoplasmic segment spans residues 1-81 (MEQRWGLLRK…WAAAGRKAAP (81 aa)). Positions 23–26 (YRRV) match the Endocytosis signal motif. The disordered stretch occupies residues 25 to 44 (RVEGPQLENLEEEDREEGEE). The span at 33–44 (NLEEEDREEGEE) shows a compositional bias: acidic residues. The helical; Signal-anchor for type II membrane protein transmembrane segment at 82-102 (YLVLTTLLIFTGAFLLGYVAF) threads the bilayer. Residues 103 to 798 (RGSCQACGDS…GDVWNIDNNF (696 aa)) are Extracellular-facing. Asparagine 235, asparagine 334, and asparagine 535 each carry an N-linked (GlcNAc...) asparagine glycan.

It belongs to the peptidase M28 family. M28B subfamily. In terms of assembly, homodimer.

Its subcellular location is the cell membrane. Functionally, mediates cellular uptake of transferrin-bound iron in a non-iron dependent manner. May be involved in iron metabolism, hepatocyte function and erythrocyte differentiation. The polypeptide is Transferrin receptor protein 2 (Tfr2) (Rattus norvegicus (Rat)).